The following is a 271-amino-acid chain: NH(3)-dependent NAD(+) synthetase (271 aa).

Glycine 43–serine 50 contacts ATP. Residue aspartate 49 participates in Mg(2+) binding. Residue arginine 137 coordinates deamido-NAD(+). Threonine 157 is a binding site for ATP. Glutamate 162 contacts Mg(2+). Deamido-NAD(+)-binding residues include lysine 170 and aspartate 177. Lysine 186 and threonine 208 together coordinate ATP. Residue histidine 257–lysine 258 coordinates deamido-NAD(+).

This sequence belongs to the NAD synthetase family. Homodimer.

It catalyses the reaction deamido-NAD(+) + NH4(+) + ATP = AMP + diphosphate + NAD(+) + H(+). The protein operates within cofactor biosynthesis; NAD(+) biosynthesis; NAD(+) from deamido-NAD(+) (ammonia route): step 1/1. Functionally, catalyzes the ATP-dependent amidation of deamido-NAD to form NAD. Uses ammonia as a nitrogen source. This is NH(3)-dependent NAD(+) synthetase from Exiguobacterium sibiricum (strain DSM 17290 / CCUG 55495 / CIP 109462 / JCM 13490 / 255-15).